A 601-amino-acid polypeptide reads, in one-letter code: Probable HECT-type ubiquitin ligase-interacting protein creD (601 aa).

Disordered stretches follow at residues 374–397 (EVDPSGYRTPGPGSGPGTPFGTLS) and 455–489 (SADYFGPSSGSNSHSPASPELSRRPSDEGYHDHDH). The span at 461–473 (PSSGSNSHSPASP) shows a compositional bias: low complexity. Residues 475–489 (LSRRPSDEGYHDHDH) show a composition bias toward basic and acidic residues.

It belongs to the arrestin family. In terms of assembly, interacts with hulA.

In terms of biological role, component of the regulatory network controlling carbon source utilization through ubiquitination and deubiquitination involving creA, creB, creC, creD and acrB. May be involved in signaling by recognizing appropriately phosphorylated substrates via its arrestin domains and then recruit a HECT-type ubiquitin ligase such as hulA, leading to ubiquitination of the substrate, providing a link between ubiquitination and phosphorylation in protein regulation and stability. This chain is Probable HECT-type ubiquitin ligase-interacting protein creD (creD), found in Neosartorya fischeri (strain ATCC 1020 / DSM 3700 / CBS 544.65 / FGSC A1164 / JCM 1740 / NRRL 181 / WB 181) (Aspergillus fischerianus).